The primary structure comprises 452 residues: 1,3-beta-glucanosyltransferase gel1 (452 aa).

Residues 1–19 (MKASAVTAALAVGASTVLA) form the signal peptide. Cysteines 71 and 100 form a disulfide. Tyrosine 89, asparagine 159, glutamate 160, aspartate 201, and arginine 206 together coordinate (1,3-beta-D-glucosyl)n. The active-site Proton donor is the glutamate 160. Cystine bridges form between cysteine 215-cysteine 345 and cysteine 233-cysteine 264. The N-linked (GlcNAc...) asparagine glycan is linked to asparagine 249. Glutamate 261 (nucleophile) is an active-site residue. Residue tyrosine 292 participates in (1,3-beta-D-glucosyl)n binding. Residues 325 to 340 (EKTSNPSGDGNYNKTG) are compositionally biased toward polar residues. The segment at 325-419 (EKTSNPSGDG…SGTSTSSKGA (95 aa)) is disordered. An N-linked (GlcNAc...) asparagine glycan is attached at asparagine 337. Positions 393–419 (STATAEPGSGSATGSSSSGTSTSSKGA) are enriched in low complexity. Alanine 419 carries the GPI-like-anchor amidated alanine lipid modification. A propeptide spans 420–452 (AAGLTVPSLTMAPVVVGAVTLLSTVFGAGLVLL) (removed in mature form).

It belongs to the glycosyl hydrolase 72 family. The GPI-like anchor contains a phosphoceramide lipid group. The anchor position has not been determined.

It is found in the cell membrane. Functionally, splits internally a 1,3-beta-glucan molecule and transfers the newly generated reducing end (the donor) to the non-reducing end of another 1,3-beta-glucan molecule (the acceptor) forming a 1,3-beta linkage, resulting in the elongation of 1,3-beta-glucan chains in the cell wall. Involved in cell wall morphogenesis. The sequence is that of 1,3-beta-glucanosyltransferase gel1 (gel1) from Aspergillus fumigatus (strain CBS 144.89 / FGSC A1163 / CEA10) (Neosartorya fumigata).